The following is a 387-amino-acid chain: Succinate--CoA ligase [ADP-forming] subunit beta (387 aa).

The ATP-grasp domain occupies 9–236 (KELFAKHNVP…KDATDPLELK (228 aa)). ATP-binding positions include Lys-45, 52–54 (GRG), Ser-94, and Glu-99. Residues Asn-191 and Asp-205 each contribute to the Mg(2+) site. Substrate-binding positions include Asn-256 and 318 to 320 (GIT).

The protein belongs to the succinate/malate CoA ligase beta subunit family. Heterotetramer of two alpha and two beta subunits. Mg(2+) serves as cofactor.

The catalysed reaction is succinate + ATP + CoA = succinyl-CoA + ADP + phosphate. It carries out the reaction GTP + succinate + CoA = succinyl-CoA + GDP + phosphate. It participates in carbohydrate metabolism; tricarboxylic acid cycle; succinate from succinyl-CoA (ligase route): step 1/1. Succinyl-CoA synthetase functions in the citric acid cycle (TCA), coupling the hydrolysis of succinyl-CoA to the synthesis of either ATP or GTP and thus represents the only step of substrate-level phosphorylation in the TCA. The beta subunit provides nucleotide specificity of the enzyme and binds the substrate succinate, while the binding sites for coenzyme A and phosphate are found in the alpha subunit. The polypeptide is Succinate--CoA ligase [ADP-forming] subunit beta (Mycolicibacterium gilvum (strain PYR-GCK) (Mycobacterium gilvum (strain PYR-GCK))).